Reading from the N-terminus, the 1447-residue chain is MRIWGRGAASWRTLLFVLSWTTTTLAKDDGPTIKVSKFKHPPLNMNYFEDSDVVLFHDMSENNIYRSDDAGVSWGKVAGVPDGVAYTLAMHEFDNSRAFIITDRREHFKTTDRGKSWEKFDSAAQTSRYRDQILSFHAGDPDRVIFNGMDCAGIFCNEVATYTTNNFKEAKTLRGSTEGCWWAKSSELFTTGKDDLDRQRVLCIGADSISPFKEDQRLFISDNFFEKIDGQVQQFEPNLDTNHGIQGVVNLAVVKKYLLVATTSINTDEMSLFVTDDTLKWHRAMFPAAHGHKVNQGAYTVLEGTNYSIQVDVMNTRPSNPMGVMFTSNSNGTFFVENLEHTNRNERGNVDFEKISGIQGIFLVNTVKNWEDVEKHGGSRKEVVTQITFDDGRTFHDIKAGDDRVHLHSVTHLDNVGRVFSSPAPGLVMGVGNTGGSLNDFEEGNLFVSDDAGASWKKALDGPHKYEFGDQGSLLVAVKDSKKDDVGEVSYSLDHGLNWKTAALPDGLKLKPEIITTTQDSTSLKFILVGSSGGDNYHVVALDFGGLQEKTCEDNDMEDWPARDADCFLKKEFKDPIPKTEDCECSDADFECDYNFIRKDGECEKAGPIVAPDEACKNAGPDTSFKGSSGWRLIPGNTCKRKDGSQKDDPVDRKCSDVVNSPAPPASGDITATQHIFKDTKLNDFEKIYLERGDSSSDSDETVIARAVEYENDGSMRVEQRVYRTRDHGKKWDEILEKEEIRGIYPHQYFKDAVFFTTKSRKVWYTIDRAEHFHEFEAPSDPGSGNPLSFHPDKKDWLIWVGQKCEKVDGKEQCFKEASISRDRGDNWRTALRYVQKCEFTGRSTYKFRDMRQIVCLTHKREDNESDNPKVIVSSNDFFEEDKQVRESNVKDFATMAEFIVVAAEDKEQKGLRALASLDGETYAAAHFPYNFEVSHQNAYTVLDSSTHAVNLFVATQLEKNQRQGSILKSNSNGTSYVMSAPKVNCDNNYFVDFEKIIGLEGVVLINSVTGKDKKGNKILRTEISHNDGSQWAYLPPPKADVNGKAYGCSSTYGDEKCALHLHHYTERLDKKKTFSAASVAGLMFGYGNIGSSLGPIEEADTFMTTDAGITWKSVKKGAWTWQYGDQGSIVVLVPRSTEDKKAKTKSISYTTNEGKDWKDFEFSQEEVTILDITSIRTGSSRNFLLWCRSSDGKTFSVNLDFTGLTDRPCVNPESGDSDYYLWSPTHPLQDNECDYNFELDPHKQCSLVPGKKPLSAEQYCKENPDAVSYYEPTGYRRIPLTTCVGGTELDKISEAHPCKGKEEEFEKLRGTSGVAIFFAIVIPIGIAAAVGWWVWRNYGSQFGQIRLGESSGFDNDAPWVKYPVIAVSAAVAVVAALPLLGSALWRTASSAYERVSGGGSGGGSWLNGGGQRRFTTRDSFARGRGDYASVDDDEGELLGDDSDEEV.

A signal peptide spans 1–26 (MRIWGRGAASWRTLLFVLSWTTTTLA). Over 27–1314 (KDDGPTIKVS…EFEKLRGTSG (1288 aa)) the chain is Lumenal. BNR repeat units follow at residues 65 to 74 (YRSDDAGVSW) and 108 to 119 (FKTTDRGKSWEK). Residues N306 and N331 are each glycosylated (N-linked (GlcNAc...) asparagine). 5 BNR repeats span residues 386–396 (QITFDDGRTFH), 447–458 (FVSDDAGASWKK), 491–500 (YSLDHGLNWK), 723–733 (YRTRDHGKKWD), and 820–829 (ISRDRGDNWR). Residues N864 and N973 are each glycosylated (N-linked (GlcNAc...) asparagine). One copy of the BNR 8 repeat lies at 1103–1113 (FMTTDAGITWK). Residues 1315–1335 (VAIFFAIVIPIGIAAAVGWWV) traverse the membrane as a helical segment. Residues 1336–1364 (WRNYGSQFGQIRLGESSGFDNDAPWVKYP) lie on the Cytoplasmic side of the membrane. Residues 1365–1385 (VIAVSAAVAVVAALPLLGSAL) form a helical membrane-spanning segment. Residues 1386 to 1447 (WRTASSAYER…LLGDDSDEEV (62 aa)) are Lumenal-facing. Residues 1426 to 1447 (GDYASVDDDEGELLGDDSDEEV) are disordered. Residues 1430–1447 (SVDDDEGELLGDDSDEEV) are compositionally biased toward acidic residues.

This sequence belongs to the VPS10-related sortilin family.

Its subcellular location is the golgi apparatus. The protein localises to the trans-Golgi network membrane. The protein resides in the prevacuolar compartment membrane. Functions as a sorting receptor in the Golgi compartment required for the intracellular sorting and delivery of soluble vacuolar proteins, like carboxypeptidase Y (CPY) and proteinase A. Executes multiple rounds of sorting by cycling between the late Golgi and a prevacuolar endosome-like compartment. In Verticillium alfalfae (strain VaMs.102 / ATCC MYA-4576 / FGSC 10136) (Verticillium wilt of alfalfa), this protein is Vacuolar protein sorting/targeting protein 10 (VPS10).